The following is a 197-amino-acid chain: Rac-like GTP-binding protein RAC1 (197 aa).

A GTP-binding site is contributed by 13–20 (GDGAVGKT). Residues 35–43 (YVPTVFDNF) carry the Effector region motif. GTP is bound by residues 60-64 (DTAGQ) and 118-121 (TKLD). Cys-194 is subject to Cysteine methyl ester. Cys-194 carries S-geranylgeranyl cysteine lipidation. The propeptide at 195–197 (SIL) is removed in mature form.

It belongs to the small GTPase superfamily. Rho family.

The protein resides in the cytoplasm. The protein localises to the membrane. Inactive GDP-bound Rho GTPases reside in the cytosol, are found in a complex with Rho GDP-dissociation inhibitors (Rho GDIs), and are released from the GDI protein in order to translocate to membranes upon activation. This is Rac-like GTP-binding protein RAC1 (RAC1) from Lotus japonicus (Lotus corniculatus var. japonicus).